The following is a 343-amino-acid chain: Heat-inducible transcription repressor HrcA (343 aa).

It belongs to the HrcA family.

Its function is as follows. Negative regulator of class I heat shock genes (grpE-dnaK-dnaJ and groELS operons). Prevents heat-shock induction of these operons. The chain is Heat-inducible transcription repressor HrcA from Natranaerobius thermophilus (strain ATCC BAA-1301 / DSM 18059 / JW/NM-WN-LF).